A 238-amino-acid polypeptide reads, in one-letter code: ATP-dependent dethiobiotin synthetase BioD (238 aa).

13–18 (DIGKTF) is an ATP binding site. T17 provides a ligand contact to Mg(2+). K38 is an active-site residue. A substrate-binding site is contributed by S42. ATP contacts are provided by residues D55, 116–119 (EGSG), 209–211 (PRI), and N216. 2 residues coordinate Mg(2+): D55 and E116.

Belongs to the dethiobiotin synthetase family. Homodimer. Mg(2+) serves as cofactor.

It is found in the cytoplasm. The enzyme catalyses (7R,8S)-7,8-diammoniononanoate + CO2 + ATP = (4R,5S)-dethiobiotin + ADP + phosphate + 3 H(+). It participates in cofactor biosynthesis; biotin biosynthesis; biotin from 7,8-diaminononanoate: step 1/2. In terms of biological role, catalyzes a mechanistically unusual reaction, the ATP-dependent insertion of CO2 between the N7 and N8 nitrogen atoms of 7,8-diaminopelargonic acid (DAPA, also called 7,8-diammoniononanoate) to form a ureido ring. This Clostridium novyi (strain NT) protein is ATP-dependent dethiobiotin synthetase BioD.